A 302-amino-acid chain; its full sequence is Putative RING-H2 finger protein ATL35 (302 aa).

The first 31 residues, 1–31 (MTIFARDLIYRIETKVLLPLFLVHLLPYVTC), serve as a signal peptide directing secretion. The chain crosses the membrane as a helical span at residues 50–70 (TVIAIIVLAIFISLSMVACFL). An RING-type; atypical zinc finger spans residues 123-165 (CAICLSEFVDKETLRWMPPCSHTFHANCIDVWLSSQSTCPACR). A Phosphoserine modification is found at Ser-226.

It belongs to the RING-type zinc finger family. ATL subfamily.

The protein localises to the membrane. It carries out the reaction S-ubiquitinyl-[E2 ubiquitin-conjugating enzyme]-L-cysteine + [acceptor protein]-L-lysine = [E2 ubiquitin-conjugating enzyme]-L-cysteine + N(6)-ubiquitinyl-[acceptor protein]-L-lysine.. The protein operates within protein modification; protein ubiquitination. This chain is Putative RING-H2 finger protein ATL35 (ATL35), found in Arabidopsis thaliana (Mouse-ear cress).